A 145-amino-acid polypeptide reads, in one-letter code: Putative nickel-responsive regulator (145 aa).

Residues His-77, His-88, His-90, and Cys-96 each contribute to the Ni(2+) site.

The protein belongs to the transcriptional regulatory CopG/NikR family. The cofactor is Ni(2+).

In terms of biological role, transcriptional regulator. The protein is Putative nickel-responsive regulator of Rhizobium rhizogenes (strain K84 / ATCC BAA-868) (Agrobacterium radiobacter).